The sequence spans 148 residues: Single-stranded DNA-binding protein 1-B, mitochondrial (148 aa).

A mitochondrion-targeting transit peptide spans 1-17 (MFHRPVLQVFRQFARCQ). The SSB domain maps to 30-142 (MNKVQLLGRV…IIADNIIFLT (113 aa)).

As to quaternary structure, homotetramer.

The protein resides in the mitochondrion. It is found in the mitochondrion matrix. Its subcellular location is the mitochondrion nucleoid. Binds preferentially and cooperatively to pyrimidine rich single-stranded DNA (ss-DNA). Required to maintain the copy number of mitochondrial DNA (mtDNA) and plays crucial roles during mtDNA replication that stimulate activity of the DNA polymerase at the replication fork. May also function in mtDNA repair. The polypeptide is Single-stranded DNA-binding protein 1-B, mitochondrial (ssbp1-b) (Xenopus laevis (African clawed frog)).